Consider the following 358-residue polypeptide: Peptide chain release factor 1 (358 aa).

Glutamine 233 carries the N5-methylglutamine modification.

Belongs to the prokaryotic/mitochondrial release factor family. Methylated by PrmC. Methylation increases the termination efficiency of RF1.

Its subcellular location is the cytoplasm. Functionally, peptide chain release factor 1 directs the termination of translation in response to the peptide chain termination codons UAG and UAA. This Staphylococcus epidermidis (strain ATCC 35984 / DSM 28319 / BCRC 17069 / CCUG 31568 / BM 3577 / RP62A) protein is Peptide chain release factor 1.